The sequence spans 591 residues: Uncoordinated protein 58 (591 aa).

The interval Met-1–His-24 is disordered. A helical transmembrane segment spans residues Val-184–Leu-204. Residue Asn-226 is glycosylated (N-linked (GlcNAc...) asparagine). 5 helical membrane passes run Thr-289 to Val-309, Val-318 to Ile-338, Pro-400 to Ile-420, Phe-428 to Val-448, and Ile-453 to Val-473.

Belongs to the two pore domain potassium channel (TC 1.A.1.8) family.

It is found in the membrane. Has a role in mobility, possibly in the transport of potassium in muscles. This chain is Uncoordinated protein 58, found in Caenorhabditis elegans.